A 162-amino-acid chain; its full sequence is Urease accessory protein UreE 1 (162 aa).

The interval 143–162 (SGGHQHHHGHDHDHHHPDHE) is disordered. The span at 152–162 (HDHDHHHPDHE) shows a compositional bias: basic and acidic residues.

Belongs to the UreE family.

The protein resides in the cytoplasm. Functionally, involved in urease metallocenter assembly. Binds nickel. Probably functions as a nickel donor during metallocenter assembly. This Brucella suis biovar 1 (strain 1330) protein is Urease accessory protein UreE 1.